Consider the following 71-residue polypeptide: Long neurotoxin 5 (71 aa).

Disulfide bonds link Cys3–Cys20, Cys14–Cys41, Cys26–Cys30, Cys45–Cys56, and Cys57–Cys62.

Belongs to the three-finger toxin family. Long-chain subfamily. Type II alpha-neurotoxin sub-subfamily. Expressed by the venom gland.

The protein resides in the secreted. Its function is as follows. Binds with high affinity to muscular (alpha-1/CHRNA1) and neuronal (alpha-7/CHRNA7) nicotinic acetylcholine receptor (nAChR) and inhibits acetylcholine from binding to the receptor, thereby impairing neuromuscular and neuronal transmission. This is Long neurotoxin 5 from Naja naja (Indian cobra).